The sequence spans 269 residues: Enoyl-[acyl-carrier-protein] reductase [NADH] (269 aa).

Residues Ser20 to Ile21, Asp64 to Val65, and Ile95 to Gly96 contribute to the NAD(+) site. Tyr158 contributes to the substrate binding site. Positions 165 and 194 each coordinate NAD(+). The residue at position 266 (Thr266) is a Phosphothreonine.

The protein belongs to the short-chain dehydrogenases/reductases (SDR) family. FabI subfamily. As to quaternary structure, homodimer. Homotetramer. Post-translationally, is phosphorylated in vivo. Phosphorylation on Thr-266 decreases enzymatic activity.

It localises to the secreted. The protein localises to the cell wall. It carries out the reaction a 2,3-saturated acyl-[ACP] + NAD(+) = a (2E)-enoyl-[ACP] + NADH + H(+). The catalysed reaction is a 2,3-saturated acyl-CoA + NAD(+) = a (2E)-enoyl-CoA + NADH + H(+). The enzyme catalyses (2E)-octenoyl-CoA + NADH + H(+) = octanoyl-CoA + NAD(+). It catalyses the reaction (2E)-dodecenoyl-CoA + NADH + H(+) = dodecanoyl-CoA + NAD(+). Its pathway is lipid metabolism; mycolic acid biosynthesis. With respect to regulation, inhA activity is controlled via phosphorylation: phosphorylation on Thr-266 decreases InhA activity and likely negatively regulates biosynthesis of mycolic acids and growth of the bacterium. InhA activity is likely inhibited by activated isoniazid, hexadecynoyl-CoA and octadecynoyl-CoA, which also block the biosynthesis of mycolic acids. The antitubercular pro-drug isoniazid (INH) is oxidatively activated by the catalase-peroxidase KatG and then covalently binds NAD to form an adduct that inhibits the activity of InhA. The inhibitory adduct is the isonicotinic-acyl-NADH where the isonicotinic-acyl group replaces the 4S (and not the 4R) hydrogen of NADH. Similarly, the antitubercular pro-drugs ethionamide (ETH) and prothionamide (PTH) are activated by the flavoprotein monooxygenase EthA, and forms an adduct with NAD (ETH-NAD and PTH-NAD, respectively) that is a tight-binding inhibitor of InhA. Its function is as follows. Enoyl-ACP reductase of the type II fatty acid syntase (FAS-II) system, which is involved in the biosynthesis of mycolic acids, a major component of mycobacterial cell walls. Catalyzes the NADH-dependent reduction of the double bond of 2-trans-enoyl-[acyl-carrier protein], an essential step in the fatty acid elongation cycle of the FAS-II pathway. Shows preference for long-chain fatty acyl thioester substrates (&gt;C16), and can also use 2-trans-enoyl-CoAs as alternative substrates. The mycobacterial FAS-II system utilizes the products of the FAS-I system as primers to extend fatty acyl chain lengths up to C56, forming the meromycolate chain that serves as the precursor for final mycolic acids. Functionally, is the primary target of the first-line antitubercular drug isoniazid (INH) and of the second-line drug ethionamide (ETH). Overexpressed inhA confers INH and ETH resistance to M.smegmatis. The mechanism of isoniazid action against InhA is covalent attachment of the activated form of the drug to the nicotinamide ring of NAD and binding of the INH-NAD adduct to the active site of InhA. Similarly, the ETH-NAD adduct binds InhA. The sequence is that of Enoyl-[acyl-carrier-protein] reductase [NADH] from Mycolicibacterium smegmatis (strain ATCC 700084 / mc(2)155) (Mycobacterium smegmatis).